Reading from the N-terminus, the 662-residue chain is UvrABC system protein B (662 aa).

In terms of domain architecture, Helicase ATP-binding spans 25 to 182; that stretch reads KGIEKREKFQ…KKLVEIQYER (158 aa). 38–45 serves as a coordination point for ATP; sequence GVTGSGKT. A Beta-hairpin motif is present at residues 91–114; that stretch reads YYDYYQPEAYVAQSDTYIEKDASI. In terms of domain architecture, Helicase C-terminal spans 429 to 595; the sequence is QIDDLYTSIQ…TIIKDIREVI (167 aa). Positions 622 to 657 constitute a UVR domain; the sequence is DKLIEKYEEEMKEAAQNLQFEKAAHLRDVIYKLKKD.

Belongs to the UvrB family. In terms of assembly, forms a heterotetramer with UvrA during the search for lesions. Interacts with UvrC in an incision complex.

It localises to the cytoplasm. Its function is as follows. The UvrABC repair system catalyzes the recognition and processing of DNA lesions. A damage recognition complex composed of 2 UvrA and 2 UvrB subunits scans DNA for abnormalities. Upon binding of the UvrA(2)B(2) complex to a putative damaged site, the DNA wraps around one UvrB monomer. DNA wrap is dependent on ATP binding by UvrB and probably causes local melting of the DNA helix, facilitating insertion of UvrB beta-hairpin between the DNA strands. Then UvrB probes one DNA strand for the presence of a lesion. If a lesion is found the UvrA subunits dissociate and the UvrB-DNA preincision complex is formed. This complex is subsequently bound by UvrC and the second UvrB is released. If no lesion is found, the DNA wraps around the other UvrB subunit that will check the other stand for damage. The sequence is that of UvrABC system protein B from Clostridium botulinum (strain Langeland / NCTC 10281 / Type F).